A 72-amino-acid chain; its full sequence is Translation initiation factor IF-1 (72 aa).

The S1-like domain maps to 1–72 (MAKEENIEMQ…SKGRIIFRAR (72 aa)).

It belongs to the IF-1 family. In terms of assembly, component of the 30S ribosomal translation pre-initiation complex which assembles on the 30S ribosome in the order IF-2 and IF-3, IF-1 and N-formylmethionyl-tRNA(fMet); mRNA recruitment can occur at any time during PIC assembly.

It localises to the cytoplasm. In terms of biological role, one of the essential components for the initiation of protein synthesis. Stabilizes the binding of IF-2 and IF-3 on the 30S subunit to which N-formylmethionyl-tRNA(fMet) subsequently binds. Helps modulate mRNA selection, yielding the 30S pre-initiation complex (PIC). Upon addition of the 50S ribosomal subunit IF-1, IF-2 and IF-3 are released leaving the mature 70S translation initiation complex. In Colwellia psychrerythraea (strain 34H / ATCC BAA-681) (Vibrio psychroerythus), this protein is Translation initiation factor IF-1.